We begin with the raw amino-acid sequence, 321 residues long: UDP-N-acetylenolpyruvoylglucosamine reductase (321 aa).

The 168-residue stretch at 36–203 (FRAGGLAEVM…TGALFEGYPE (168 aa)) folds into the FAD-binding PCMH-type domain. R183 is an active-site residue. Catalysis depends on S232, which acts as the Proton donor. E302 is an active-site residue.

It belongs to the MurB family. FAD serves as cofactor.

Its subcellular location is the cytoplasm. The enzyme catalyses UDP-N-acetyl-alpha-D-muramate + NADP(+) = UDP-N-acetyl-3-O-(1-carboxyvinyl)-alpha-D-glucosamine + NADPH + H(+). The protein operates within cell wall biogenesis; peptidoglycan biosynthesis. Functionally, cell wall formation. The sequence is that of UDP-N-acetylenolpyruvoylglucosamine reductase from Agrobacterium fabrum (strain C58 / ATCC 33970) (Agrobacterium tumefaciens (strain C58)).